A 602-amino-acid polypeptide reads, in one-letter code: Aspartate--tRNA(Asp/Asn) ligase (602 aa).

Glu175 contributes to the L-aspartate binding site. Positions Gln199–Lys202 are aspartate. Residue Arg221 participates in L-aspartate binding. ATP contacts are provided by residues Arg221 to Glu223 and Gln230. Residue His458 coordinates L-aspartate. Glu492 is an ATP binding site. Arg499 lines the L-aspartate pocket. Gly544–Arg547 contributes to the ATP binding site.

This sequence belongs to the class-II aminoacyl-tRNA synthetase family. Type 1 subfamily. In terms of assembly, homodimer.

Its subcellular location is the cytoplasm. It carries out the reaction tRNA(Asx) + L-aspartate + ATP = L-aspartyl-tRNA(Asx) + AMP + diphosphate. In terms of biological role, aspartyl-tRNA synthetase with relaxed tRNA specificity since it is able to aspartylate not only its cognate tRNA(Asp) but also tRNA(Asn). Reaction proceeds in two steps: L-aspartate is first activated by ATP to form Asp-AMP and then transferred to the acceptor end of tRNA(Asp/Asn). In Cupriavidus necator (strain ATCC 17699 / DSM 428 / KCTC 22496 / NCIMB 10442 / H16 / Stanier 337) (Ralstonia eutropha), this protein is Aspartate--tRNA(Asp/Asn) ligase.